Consider the following 862-residue polypeptide: Semaphorin-4D (862 aa).

A signal peptide spans 1-21 (MRMCTPIRGLLMALAVMFGTA). The Sema domain occupies 22 to 500 (MAFAPIPRIT…SNSGVVQAPL (479 aa)). Residues 22-734 (MAFAPIPRIT…TMYLKSSDNR (713 aa)) are Extracellular-facing. 2 N-linked (GlcNAc...) asparagine glycosylation sites follow: N49 and N77. Disulfide bonds link C97/C108 and C126/C135. 2 N-linked (GlcNAc...) asparagine glycosylation sites follow: N139 and N191. 2 cysteine pairs are disulfide-bonded: C257–C370 and C281–C326. N-linked (GlcNAc...) asparagine glycosylation is found at N329, N379, and N419. Residues 502-551 (FCGKHGTCEDCVLARDPYCAWSPPTATCVALHQTESPSRGLIQEMSGDAS) form the PSI domain. Cystine bridges form between C503–C520, C509–C553, C512–C529, and C576–C624. Positions 554–636 (PDKSKGSYRQ…EERVKNKTVF (83 aa)) constitute an Ig-like C2-type domain. N-linked (GlcNAc...) asparagine glycosylation is found at N613 and N632. The chain crosses the membrane as a helical span at residues 735-755 (LLMSLFLFFFVLFLCLFFYNC). Residues 756–862 (YKGYLPRQCL…KFADSDADGD (107 aa)) lie on the Cytoplasmic side of the membrane. The disordered stretch occupies residues 794–837 (VEPGSFSQQNGEHPKPALDTGYETEQDTITSKVPTDREDSQRID). The segment covering 827-837 (PTDREDSQRID) has biased composition (basic and acidic residues). S833 bears the Phosphoserine mark.

It belongs to the semaphorin family. Homodimer. Interacts with PLXNB2. Interacts with PLXNB1. In terms of tissue distribution, strongly expressed in skeletal muscle, peripheral blood lymphocytes, spleen, and thymus and also expressed at lower levels in testes, brain, kidney, small intestine, prostate, heart, placenta, lung and pancreas, but not in colon and liver.

The protein resides in the cell membrane. Functionally, cell surface receptor for PLXNB1 and PLXNB2 that plays an important role in cell-cell signaling. Regulates GABAergic synapse development. Promotes the development of inhibitory synapses in a PLXNB1-dependent manner. Modulates the complexity and arborization of developing neurites in hippocampal neurons by activating PLXNB1 and interaction with PLXNB1 mediates activation of RHOA. Promotes the migration of cerebellar granule cells. Plays a role in the immune system; induces B-cells to aggregate and improves their viability (in vitro). Induces endothelial cell migration through the activation of PTK2B/PYK2, SRC, and the phosphatidylinositol 3-kinase-AKT pathway. In Homo sapiens (Human), this protein is Semaphorin-4D (SEMA4D).